Consider the following 148-residue polypeptide: MCSSAAASPALDDIEEGIALRPKFDAAGLVTCVTTDAGSGDVLMVAHMNAEALEKTIQSGEAWYYSRSRKRLWKKGESSGHVQRVLEMRIDCDQDAVWIRVDQAGGAACHTGRKSCFYRRIDRDASGEPLLTMVDAERQFDPDKVYGK.

Asp-91 lines the Mg(2+) pocket. Cys-92 contributes to the Zn(2+) binding site. Mg(2+)-binding residues include Asp-93 and Asp-95. Residues Cys-109 and Cys-116 each contribute to the Zn(2+) site.

Belongs to the PRA-CH family. In terms of assembly, homodimer. It depends on Mg(2+) as a cofactor. Zn(2+) serves as cofactor.

Its subcellular location is the cytoplasm. The enzyme catalyses 1-(5-phospho-beta-D-ribosyl)-5'-AMP + H2O = 1-(5-phospho-beta-D-ribosyl)-5-[(5-phospho-beta-D-ribosylamino)methylideneamino]imidazole-4-carboxamide. Its pathway is amino-acid biosynthesis; L-histidine biosynthesis; L-histidine from 5-phospho-alpha-D-ribose 1-diphosphate: step 3/9. Functionally, catalyzes the hydrolysis of the adenine ring of phosphoribosyl-AMP. This chain is Phosphoribosyl-AMP cyclohydrolase, found in Rhodopseudomonas palustris (strain HaA2).